A 654-amino-acid chain; its full sequence is Fructose-1,6-bisphosphatase class 3 (654 aa).

The tract at residues 288–307 (NPAFKPKKRPDKHERLTQRE) is disordered. Residues 298 to 307 (DKHERLTQRE) are compositionally biased toward basic and acidic residues.

Belongs to the FBPase class 3 family. The cofactor is Mn(2+).

It carries out the reaction beta-D-fructose 1,6-bisphosphate + H2O = beta-D-fructose 6-phosphate + phosphate. Its pathway is carbohydrate biosynthesis; gluconeogenesis. This Staphylococcus aureus (strain MRSA252) protein is Fructose-1,6-bisphosphatase class 3.